The sequence spans 203 residues: MAKAYDHLFKLLLIGDSGVGKTCLIIRFAEDNFNSTYISTIGIDFKIRTVEIEGKRIKLQVWDTAGQERFKTITTAYYRGAMGIILVYDITDEKSFENIQNWMKSIKENASAGVERLLLGNKCDMEAKRKVQREQAERLAREHRIRFFETSAKSSVNVDEAFSSLARDILLKTGGRRSGNSSKPSSTDLKVSDKKNSNKCSLG.

The GTP site is built by serine 17, glycine 18, glycine 20, lysine 21, threonine 22, cysteine 23, and threonine 40. Threonine 22 is a Mg(2+) binding site. A Switch 1 motif is present at residues 31–45; sequence DNFNSTYISTIGIDF. Mg(2+) is bound at residue threonine 40. Residues lysine 46 and lysine 58 each participate in a glycyl lysine isopeptide (Lys-Gly) (interchain with G-Cter in ubiquitin) cross-link. Aspartate 63 contacts Mg(2+). A Switch 2 motif is present at residues 63 to 80; that stretch reads DTAGQERFKTITTAYYRG. Positions 66, 121, 122, 124, 152, and 153 each coordinate GTP. The disordered stretch occupies residues 173–203; the sequence is TGGRRSGNSSKPSSTDLKVSDKKNSNKCSLG. Serine 178 carries the post-translational modification Phosphoserine. The segment covering 178–189 has biased composition (polar residues); that stretch reads SGNSSKPSSTDL. Cysteine 200 carries the cysteine methyl ester modification. Cysteine 200 carries S-geranylgeranyl cysteine lipidation. Residues 201–203 constitute a propeptide, removed in mature form; the sequence is SLG.

Belongs to the small GTPase superfamily. Rab family. Interacts (GTP-bound form) with MICALL2; competes with RAB8A and is involved in tight junctions assembly. Interacts (GTP-bound form) with MICALL1. Interacts (GTP-bound form) with MICAL1, MICAL3, MICALCL, EHBP1 and EHBP1L1; ternary complexes of RAB8A, RAB13 and either MICAL1 or EHBP1L1 are possible. Interacts with PRKACA; downstream effector of RAB13 involved in tight junction assembly. Interacts with GRB2; may recruit RAB13 to the leading edge of migrating endothelial cells where it can activate RHOA. Interacts (isoprenylated form) with PDE6D; dissociates RAB13 from membranes. Interacts with BICDL2/BICDR2. Interacts with LEPROT and LEPROTL1. Mg(2+) serves as cofactor. In terms of processing, ubiquitinated via 'Lys-11'-linked ubiquitination on Lys-46 and Lys-58; impairing the recruitment of guanosine diphosphate (GDP) dissociation inhibitor 1/GDI1. In terms of tissue distribution, highest levels found in lung, kidney, whole brain and spinal cord. Expressed in all tissues tested including Sertoli and germ cells (at protein level). Also detected in osteoclasts.

Its subcellular location is the cell membrane. It localises to the cytoplasmic vesicle membrane. It is found in the cell junction. The protein localises to the tight junction. The protein resides in the golgi apparatus. Its subcellular location is the trans-Golgi network membrane. It localises to the recycling endosome membrane. It is found in the cell projection. The protein localises to the lamellipodium. It catalyses the reaction GTP + H2O = GDP + phosphate + H(+). Its activity is regulated as follows. Regulated by guanine nucleotide exchange factors (GEFs) including DENND1C, which promote the exchange of bound GDP for free GTP. Regulated by GTPase activating proteins (GAPs) which increase the GTP hydrolysis activity. Inhibited by GDP dissociation inhibitors (GDIs). Activated in response to insulin. In terms of biological role, the small GTPases Rab are key regulators of intracellular membrane trafficking, from the formation of transport vesicles to their fusion with membranes. Rabs cycle between an inactive GDP-bound form and an active GTP-bound form that is able to recruit to membranes different sets of downstream effectors directly responsible for vesicle formation, movement, tethering and fusion. RAB13 is involved in endocytic recycling and regulates the transport to the plasma membrane of transmembrane proteins like the tight junction protein OCLN/occludin. Thereby, it regulates the assembly and the activity of tight junctions. Moreover, it may also regulate tight junction assembly by activating the PKA signaling pathway and by reorganizing the actin cytoskeleton through the activation of the downstream effectors PRKACA and MICALL2 respectively. Through its role in tight junction assembly, may play a role in the establishment of Sertoli cell barrier. Plays also a role in angiogenesis through regulation of endothelial cells chemotaxis. Also involved in neurite outgrowth. Has also been proposed to play a role in post-Golgi membrane trafficking from the TGN to the recycling endosome. Finally, it has been involved in insulin-induced transport to the plasma membrane of the glucose transporter GLUT4 and therefore may play a role in glucose homeostasis. The chain is Ras-related protein Rab-13 from Rattus norvegicus (Rat).